We begin with the raw amino-acid sequence, 348 residues long: tRNA pseudouridine synthase D (348 aa).

The active-site Nucleophile is D81. The 147-residue stretch at G158 to L304 folds into the TRUD domain.

It belongs to the pseudouridine synthase TruD family.

It carries out the reaction uridine(13) in tRNA = pseudouridine(13) in tRNA. Functionally, responsible for synthesis of pseudouridine from uracil-13 in transfer RNAs. The chain is tRNA pseudouridine synthase D from Aliivibrio salmonicida (strain LFI1238) (Vibrio salmonicida (strain LFI1238)).